Reading from the N-terminus, the 306-residue chain is Follistatin-related protein 1 (306 aa).

Residues 1 to 18 (MWKRWLALALVTIALVHG) form the signal peptide. Residues 28–51 (ICANVFCGAGRECAVTEKGEPTCL) enclose the Follistatin-like domain. Cystine bridges form between C29–C40, C34–C50, C52–C82, C56–C75, and C64–C96. One can recognise a Kazal-like domain in the interval 46–98 (GEPTCLCIEQCKPHKRPVCGSNGKTYLNHCELHRDACLTGSKIQVDYDGHCKE). N142 is a glycosylation site (N-linked (GlcNAc...) asparagine). An EF-hand 1 domain is found at 142 to 176 (NYSEILDKYFKSFDNGDSHLDSSEFLKFVEQNETA). S163 is modified (phosphoserine). 2 N-linked (GlcNAc...) asparagine glycosylation sites follow: N173 and N178. The region spanning 191–226 (LRGLCVDALIELSDENADWKLSFQEFLKCLNPSFNP) is the EF-hand 2 domain. A VWFC domain is found at 231–285 (CALEDETYADGAETEVDCNRCVCSCGHWVCTAMTCDGKNQKGVQTHTEEEMTRYA).

As to quaternary structure, homodimer. Interacts with SCN10A. Interacts with DIP2A; DIP2A may act as a cell surface receptor for FSTL1. Interacts with BMP4. Interacts with CD14; this interaction promotes TL4-mediated signaling cascade.

The protein resides in the secreted. Secreted glycoprotein that is involved in various physiological processes, such as angiogenesis, regulation of the immune response, cell proliferation and differentiation. Plays a role in the development of the central nervous system, skeletal system, lungs, and ureter. Promotes endothelial cell survival, migration and differentiation into network structures in an AKT-dependent manner. Also promotes survival of cardiac myocytes. Initiates various signaling cascades by activating different receptors on the cell surface such as DIP2A, TLR4 or BMP receptors. In Rattus norvegicus (Rat), this protein is Follistatin-related protein 1 (Fstl1).